We begin with the raw amino-acid sequence, 51 residues long: Large ribosomal subunit protein eL39 (51 aa).

Belongs to the eukaryotic ribosomal protein eL39 family.

The polypeptide is Large ribosomal subunit protein eL39 (Picrophilus torridus (strain ATCC 700027 / DSM 9790 / JCM 10055 / NBRC 100828 / KAW 2/3)).